Consider the following 192-residue polypeptide: Rho-related protein racC (192 aa).

Residue 13-20 participates in GTP binding; it reads GDGAVGKT. The Effector region motif lies at 35-43; that stretch reads YIPTVFDNY. GTP-binding positions include 60-64 and 118-121; these read DTAGQ and TKLD. Cysteine methyl ester is present on cysteine 189. Residue cysteine 189 is the site of S-geranylgeranyl cysteine attachment. Positions 190 to 192 are cleaved as a propeptide — removed in mature form; the sequence is IVM.

The protein belongs to the small GTPase superfamily. Rho family. As to quaternary structure, interacts with pakB.

The protein localises to the cell membrane. The protein is Rho-related protein racC (racC) of Dictyostelium discoideum (Social amoeba).